A 239-amino-acid polypeptide reads, in one-letter code: 7-cyano-7-deazaguanine synthase (239 aa).

7–17 is an ATP binding site; that stretch reads LSGGIDSSTLL. C184, C192, C195, and C198 together coordinate Zn(2+).

Belongs to the QueC family. The cofactor is Zn(2+).

The enzyme catalyses 7-carboxy-7-deazaguanine + NH4(+) + ATP = 7-cyano-7-deazaguanine + ADP + phosphate + H2O + H(+). Its pathway is purine metabolism; 7-cyano-7-deazaguanine biosynthesis. Functionally, catalyzes the ATP-dependent conversion of 7-carboxy-7-deazaguanine (CDG) to 7-cyano-7-deazaguanine (preQ(0)). This chain is 7-cyano-7-deazaguanine synthase, found in Archaeoglobus fulgidus (strain ATCC 49558 / DSM 4304 / JCM 9628 / NBRC 100126 / VC-16).